The following is a 173-amino-acid chain: UPF0316 protein Bsph_0745 (173 aa).

The next 3 membrane-spanning stretches (helical) occupy residues 4–24 (IVLI…RTIF), 31–51 (FLAA…LSLV), and 58–78 (MLAM…GAKI).

Belongs to the UPF0316 family.

It localises to the cell membrane. In Lysinibacillus sphaericus (strain C3-41), this protein is UPF0316 protein Bsph_0745.